A 487-amino-acid polypeptide reads, in one-letter code: Variant surface glycoprotein WRATAT B (487 aa).

Positions 1–19 (MWIILALLTLAGSRVAHGA) are cleaved as a signal peptide. 4 N-linked (GlcNAc...) asparagine glycosylation sites follow: Asn-71, Asn-84, Asn-418, and Asn-465. The interval 443–468 (KPKAGTEAATTGPGERDAGATANTTG) is disordered. The GPI-anchor amidated serine moiety is linked to residue Ser-470. The propeptide at 471-487 (NSFVIKTSPLLFAFLLF) is removed in mature form.

It is found in the cell membrane. Its function is as follows. VSG forms a coat on the surface of the parasite. The trypanosome evades the immune response of the host by expressing a series of antigenically distinct VSGs from an estimated 1000 VSG genes. In Trypanosoma brucei rhodesiense, this protein is Variant surface glycoprotein WRATAT B.